A 166-amino-acid chain; its full sequence is 16S rRNA aminocarboxypropyltransferase (166 aa).

Residues Thr-17, Ile-62, Leu-84, Tyr-99, and Ser-103 each contribute to the S-adenosyl-L-methionine site.

This sequence belongs to the TDD superfamily. TSR3 family.

The protein localises to the cytoplasm. It carries out the reaction an N(1)-methylpseudouridine in rRNA + S-adenosyl-L-methionine = N(1)-methyl-N(3)-[(3S)-3-amino-3-carboxypropyl]pseudouridine in rRNA + S-methyl-5'-thioadenosine + H(+). Aminocarboxypropyltransferase that catalyzes the aminocarboxypropyl transfer on pseudouridine corresponding to position 914 in M.jannaschii 16S rRNA. It constitutes the last step in biosynthesis of the hypermodified N1-methyl-N3-(3-amino-3-carboxypropyl) pseudouridine (m1acp3-Psi). The sequence is that of 16S rRNA aminocarboxypropyltransferase from Saccharolobus islandicus (strain Y.N.15.51 / Yellowstone #2) (Sulfolobus islandicus).